The chain runs to 263 residues: Taurine import ATP-binding protein TauB (263 aa).

The region spanning 4–235 (LTAEAISLSF…RYAAGETVRS (232 aa)) is the ABC transporter domain. An ATP-binding site is contributed by 40–47 (GPSGCGKS).

It belongs to the ABC transporter superfamily. Taurine importer (TC 3.A.1.17.1) family. As to quaternary structure, the complex is composed of two ATP-binding proteins (TauB), two transmembrane proteins (TauC) and a solute-binding protein (TauA).

The protein localises to the cell inner membrane. The catalysed reaction is taurine(out) + ATP + H2O = taurine(in) + ADP + phosphate + H(+). Part of the ABC transporter complex TauABC involved in taurine import. Responsible for energy coupling to the transport system. This Pseudomonas aeruginosa (strain UCBPP-PA14) protein is Taurine import ATP-binding protein TauB.